Consider the following 266-residue polypeptide: Apolipoprotein A-I (266 aa).

The first 18 residues, 1–18 (MKAVVLTLAVLFLTGSQA), serve as a signal peptide directing secretion. 2 consecutive repeat copies span residues 67-88 (LKLL…EQIG) and 89-110 (PVTQ…QEMS). The 10 X approximate tandem repeats stretch occupies residues 67–266 (LKLLDNWDSL…DEAAKKLNTQ (200 aa)). Met109 is modified (methionine sulfoxide). One copy of the 3; half-length repeat lies at 111–121 (KDLEEVKQKVQ). 5 repeat units span residues 122–143 (PYLD…QKVA), 144–165 (PLGT…EKLT), 166–187 (PLGE…AHLA), 188–209 (PYSD…EGGS), and 210–231 (ASLA…EKAK). The 9; half-length repeat unit spans residues 232-242 (PALEDLRQGLL). Repeat unit 10 spans residues 243 to 266 (PVLESFKVSLLAAVDEAAKKLNTQ).

The protein belongs to the apolipoprotein A1/A4/E family. In terms of assembly, homodimer. Interacts with APOA1BP and CLU. Component of a sperm activating protein complex (SPAP), consisting of APOA1, an immunoglobulin heavy chain, an immunoglobulin light chain and albumin. Interacts with NDRG1. Interacts with SCGB3A2. Interacts with NAXE and YJEFN3. Post-translationally, glycosylated. Palmitoylated. In terms of processing, phosphorylation sites are present in the extracellular medium.

It is found in the secreted. Its function is as follows. Participates in the reverse transport of cholesterol from tissues to the liver for excretion by promoting cholesterol efflux from tissues and by acting as a cofactor for the lecithin cholesterol acyltransferase (LCAT). As part of the SPAP complex, activates spermatozoa motility. In Mustela putorius furo (European domestic ferret), this protein is Apolipoprotein A-I (APOA1).